Consider the following 492-residue polypeptide: Ketol-acid reductoisomerase (NADP(+)) (492 aa).

In terms of domain architecture, KARI N-terminal Rossmann spans leucine 14 to serine 208. NADP(+)-binding positions include cysteine 45–glutamine 48, arginine 68, arginine 76, serine 78, and aspartate 108–glutamine 110. Histidine 132 is an active-site residue. Glycine 158 contacts NADP(+). KARI C-terminal knotted domains are found at residues serine 209–lysine 344 and tyrosine 345–methionine 485. 4 residues coordinate Mg(2+): aspartate 217, glutamate 221, glutamate 389, and glutamate 393. Serine 414 serves as a coordination point for substrate.

Belongs to the ketol-acid reductoisomerase family. The cofactor is Mg(2+).

It carries out the reaction (2R)-2,3-dihydroxy-3-methylbutanoate + NADP(+) = (2S)-2-acetolactate + NADPH + H(+). It catalyses the reaction (2R,3R)-2,3-dihydroxy-3-methylpentanoate + NADP(+) = (S)-2-ethyl-2-hydroxy-3-oxobutanoate + NADPH + H(+). It participates in amino-acid biosynthesis; L-isoleucine biosynthesis; L-isoleucine from 2-oxobutanoate: step 2/4. Its pathway is amino-acid biosynthesis; L-valine biosynthesis; L-valine from pyruvate: step 2/4. Involved in the biosynthesis of branched-chain amino acids (BCAA). Catalyzes an alkyl-migration followed by a ketol-acid reduction of (S)-2-acetolactate (S2AL) to yield (R)-2,3-dihydroxy-isovalerate. In the isomerase reaction, S2AL is rearranged via a Mg-dependent methyl migration to produce 3-hydroxy-3-methyl-2-ketobutyrate (HMKB). In the reductase reaction, this 2-ketoacid undergoes a metal-dependent reduction by NADPH to yield (R)-2,3-dihydroxy-isovalerate. The sequence is that of Ketol-acid reductoisomerase (NADP(+)) from Haemophilus influenzae (strain 86-028NP).